Reading from the N-terminus, the 320-residue chain is Aminoacyl tRNA synthase complex-interacting multifunctional protein 2 (320 aa).

Ser36 carries the post-translational modification Phosphoserine. Residues 82-162 (TPDADLDVTN…HTHSSVKNVP (81 aa)) are interaction with PRKN. The interaction with TP53 stretch occupies residues 162–225 (PENLVKCFGE…FLFSLFGQKH (64 aa)). The GST C-terminal domain occupies 220–317 (LFGQKHNAVT…NLAPFSTALQ (98 aa)).

Part of the multisynthetase complex (MSC), a multisubunit complex that groups tRNA ligases for Arg (RARS1), Asp (DARS1), Gln (QARS1), Ile (IARS1), Leu (LARS1), Lys (KARS1), Met (MARS1) the bifunctional ligase for Glu and Pro (EPRS1) and the auxiliary subunits AIMP1/p43, AIMP2/p38 and EEF1E1/p18. Interacts (via N-terminus) with KARS1. Interacts with EPRS1. Forms a linear complex that contains MARS1, EEF1E1, EPRS1 and AIMP2 that is at the core of the multisubunit complex. Binds FUBP1 (via C-terminus). Interacts in both its unphosphorylated and phosphorylated forms with p53/TP53 (via N-terminus) in the nucleus following UV irradiation. Interacts (via N-terminus) with PRKN/parkin (via first RING-type domain). Interacts with TARS3. Post-translationally, phosphorylated on serine residues in response to UV irradiation. Ubiquitinated by PRKN, leading to its degradation by the proteasome.

It is found in the cytoplasm. Its subcellular location is the cytosol. It localises to the nucleus. In terms of biological role, required for assembly and stability of the aminoacyl-tRNA synthase complex. Mediates ubiquitination and degradation of FUBP1, a transcriptional activator of MYC, leading to MYC down-regulation which is required for aveolar type II cell differentiation. Blocks MDM2-mediated ubiquitination and degradation of p53/TP53. Functions as a proapoptotic factor. This Mus musculus (Mouse) protein is Aminoacyl tRNA synthase complex-interacting multifunctional protein 2 (Aimp2).